A 251-amino-acid chain; its full sequence is Ditrans,polycis-undecaprenyl-diphosphate synthase ((2E,6E)-farnesyl-diphosphate specific) (251 aa).

Asp19 is an active-site residue. Asp19 contributes to the Mg(2+) binding site. Residues 20–23 (GNNR), Trp24, His36, and 64–66 (SSE) each bind substrate. The active-site Proton acceptor is the Asn67. Residues Trp68, Arg70, Arg187, and 193–195 (RIS) contribute to the substrate site. Residue Glu206 participates in Mg(2+) binding.

The protein belongs to the UPP synthase family. As to quaternary structure, homodimer. Mg(2+) serves as cofactor.

The enzyme catalyses 8 isopentenyl diphosphate + (2E,6E)-farnesyl diphosphate = di-trans,octa-cis-undecaprenyl diphosphate + 8 diphosphate. Catalyzes the sequential condensation of isopentenyl diphosphate (IPP) with (2E,6E)-farnesyl diphosphate (E,E-FPP) to yield (2Z,6Z,10Z,14Z,18Z,22Z,26Z,30Z,34E,38E)-undecaprenyl diphosphate (di-trans,octa-cis-UPP). UPP is the precursor of glycosyl carrier lipid in the biosynthesis of bacterial cell wall polysaccharide components such as peptidoglycan and lipopolysaccharide. In Pseudomonas aeruginosa (strain ATCC 15692 / DSM 22644 / CIP 104116 / JCM 14847 / LMG 12228 / 1C / PRS 101 / PAO1), this protein is Ditrans,polycis-undecaprenyl-diphosphate synthase ((2E,6E)-farnesyl-diphosphate specific).